The chain runs to 340 residues: MTVSSSIVPPGGLVLVTGVTGFIGSYIANGLLELGYRVRGTVRSSEKATWVTKALTKRNPSANFEAVIVPDQNAPGVWEAVLKDVDGIAHVAGDVSFGPDPTKVITPSVEALRRLLEAAKKEPSVKRFVFTSSDQAASNRSTTREILINEDTWNEEAIEAAWRPPPYEAERGWDVYSALKAQVEKEMWRFSREEKPSFVVNSVLPTYTIGAIFDEQQAGSTAKWLLDFYKDPSKDGFMRGFGSSYYVYVGDVALLHIGALTLEEVQNKRLLAFAGRFNFNSWLEVFRKHDPSKPWPEDDPTQALDTRRVNGETELYILKQFGKDGWTSFEDSALKVLESP.

A helical transmembrane segment spans residues 7-27; the sequence is IVPPGGLVLVTGVTGFIGSYI. N139 carries an N-linked (GlcNAc...) asparagine glycan. Y176 contacts NADP(+).

Belongs to the NAD(P)-dependent epimerase/dehydratase family. Dihydroflavonol-4-reductase subfamily.

The protein resides in the membrane. Functionally, NAD-dependent epimerase/dehydratase; part of the gene cluster that mediates the biosynthesis of terrein, a fungal metabolite with ecological, antimicrobial, antiproliferative, and antioxidative activities. The first step in the pathway is performed by the polyketide synthase terA that produces 4-hydroxy-6-methylpyranon (4-HMP), orsellinic acid (OA), and 2,3-dehydro-6-hydroxymellein (2,3-dehydro-6-HM) by condensing acetyl-CoA with two, three, or four malonyl-CoA units, respectively. 4-HMP and OA are not pathway intermediates, but are rather shunt or side products. 2,3-dehydro-6-HM is further converted to 6-hydroxymellein (6-HM) by the 6-hydroxymellein synthase terB. The monooxygenases terC and terD, the multicopper oxidase terE and the Kelch-like protein terF are then involved in the transformation of 6-HM to terrein. Even if they are co-regulated with the other terrein cluster genes, terH and terI seem to be dispensable for terrein production; whereas one or both of the 2 transporters terG and terJ are probably required for efficient secretion of metabolites. The protein is NAD-dependent epimerase/dehydratase terH of Aspergillus terreus (strain NIH 2624 / FGSC A1156).